The sequence spans 639 residues: Lactose permease (639 aa).

Residues 1-473 (MKDITKQKFS…AEIVIELEKT (473 aa)) are permease. The next 12 membrane-spanning stretches (helical) occupy residues 20–40 (FALG…YFIV), 59–79 (IGLI…IDPI), 99–119 (VIGA…IFGL), 124–144 (WIAF…FYSF), 176–196 (IGWN…TFIA), 207–227 (WFGF…AVAF), 264–284 (LAYL…FYFF), 294–314 (FWIA…LYPV), 322–342 (KVLF…FIFG), 347–367 (MMVT…VVVL), 398–418 (ITGA…GMTG), and 433–453 (FEIY…VIFL). Residues 505–609 (NEVDGNTLTG…QDDIIMYFTQ (105 aa)) form the PTS EIIA type-1 domain. Phosphohistidine; by HPr is present on H557.

The protein in the N-terminal section; belongs to the sodium:galactoside symporter (TC 2.A.2) family.

It is found in the cell membrane. Its function is as follows. Responsible for transport of beta-galactosides into the cell, with the concomitant uptake of protons (symport system), and also for transport of homologous and heterologous exchange of beta-galactosides. The chain is Lactose permease (lacS) from Leuconostoc lactis.